The following is a 315-amino-acid chain: Protein ORANGE-LIKE, chloroplastic (315 aa).

The N-terminal 16 residues, 1-16 (MTCFSSATPHRHHLLL), are a transit peptide targeting the chloroplast. Transmembrane regions (helical) follow at residues 155-175 (LYSTSVALISGIIFFGGLIAP) and 207-227 (IVASFSGGAVGVISTLMLIEV). The CR-type zinc finger occupies 225-307 (IEVNNVKQQE…CTGMVTASEH (83 aa)). The CXXCXGXG motif repeat unit spans residues 238 to 245 (CKYCLGTG). One copy of the CXXCXXXG motif repeat lies at 249–256 (CARCSASG). A CXXCXGXG motif repeat occupies 282 to 289 (CLNCSGAG). A CXXCXXXG motif repeat occupies 293-300 (CPTCLCTG).

This sequence belongs to the orange-like family. Interacts with PSY1.

It is found in the plastid. Its subcellular location is the chloroplast membrane. In terms of biological role, may be associated with accumulation of carotenoids in chromoplasts. The protein is Protein ORANGE-LIKE, chloroplastic (ORLIKE) of Arabidopsis thaliana (Mouse-ear cress).